Consider the following 347-residue polypeptide: NADH-ubiquinone oxidoreductase chain 2 (347 aa).

The next 11 helical transmembrane spans lie at 3 to 23 (PPIL…VLTS), 25 to 45 (HWLL…PILM), 60 to 80 (FLTQ…NLMF), 96 to 116 (GLVT…FWVP), 122 to 142 (ISLS…LSIL), 153 to 173 (LLIT…LNQT), 178 to 198 (ILAY…TYNP), 200 to 220 (LMIL…MLFM), 237 to 257 (LPLM…LPPL), 274 to 294 (DMII…YFYM), and 323 to 343 (IILL…TPMM).

This sequence belongs to the complex I subunit 2 family. In terms of assembly, core subunit of respiratory chain NADH dehydrogenase (Complex I) which is composed of 45 different subunits. Interacts with TMEM242.

It is found in the mitochondrion inner membrane. The catalysed reaction is a ubiquinone + NADH + 5 H(+)(in) = a ubiquinol + NAD(+) + 4 H(+)(out). Its function is as follows. Core subunit of the mitochondrial membrane respiratory chain NADH dehydrogenase (Complex I) which catalyzes electron transfer from NADH through the respiratory chain, using ubiquinone as an electron acceptor. Essential for the catalytic activity and assembly of complex I. The polypeptide is NADH-ubiquinone oxidoreductase chain 2 (Halichoerus grypus (Gray seal)).